We begin with the raw amino-acid sequence, 376 residues long: Cysteine synthase 1 (376 aa).

The transit peptide at 1–16 (MFRHGVRTFATTSLRR) directs the protein to the mitochondrion. Residue K79 is modified to N6-(pyridoxal phosphate)lysine. Pyridoxal 5'-phosphate-binding positions include N109, 215–219 (GTGGT), and S314.

It belongs to the cysteine synthase/cystathionine beta-synthase family. Requires pyridoxal 5'-phosphate as cofactor.

It localises to the mitochondrion. The catalysed reaction is O-succinyl-L-serine + hydrogen sulfide = L-cysteine + succinate. The enzyme catalyses O-acetyl-L-serine + hydrogen sulfide = L-cysteine + acetate. Its pathway is amino-acid biosynthesis; L-cysteine biosynthesis; L-cysteine from L-serine: step 2/2. Its function is as follows. Catalyzes the conversion of O-succinyl-L-serine into cysteine, the last step in the cysteine biosynthesis pathway. Can also use O-acetyl-L-serine. In Neurospora crassa (strain ATCC 24698 / 74-OR23-1A / CBS 708.71 / DSM 1257 / FGSC 987), this protein is Cysteine synthase 1 (cys-17).